The primary structure comprises 197 residues: Imidazoleglycerol-phosphate dehydratase (197 aa).

It belongs to the imidazoleglycerol-phosphate dehydratase family.

The protein localises to the cytoplasm. The catalysed reaction is D-erythro-1-(imidazol-4-yl)glycerol 3-phosphate = 3-(imidazol-4-yl)-2-oxopropyl phosphate + H2O. Its pathway is amino-acid biosynthesis; L-histidine biosynthesis; L-histidine from 5-phospho-alpha-D-ribose 1-diphosphate: step 6/9. In Bradyrhizobium sp. (strain ORS 278), this protein is Imidazoleglycerol-phosphate dehydratase.